We begin with the raw amino-acid sequence, 505 residues long: AMP phosphorylase (505 aa).

Residues glycine 170, 196–201 (SRAITS), and threonine 205 each bind AMP. Aspartate 258 functions as the Proton donor in the catalytic mechanism. Serine 266 and lysine 290 together coordinate AMP.

It belongs to the thymidine/pyrimidine-nucleoside phosphorylase family. Type 2 subfamily.

It catalyses the reaction AMP + phosphate = alpha-D-ribose 1,5-bisphosphate + adenine. It carries out the reaction CMP + phosphate = cytosine + alpha-D-ribose 1,5-bisphosphate. The enzyme catalyses UMP + phosphate = alpha-D-ribose 1,5-bisphosphate + uracil. Catalyzes the conversion of AMP and phosphate to adenine and ribose 1,5-bisphosphate (R15P). Exhibits phosphorylase activity toward CMP and UMP in addition to AMP. Functions in an archaeal AMP degradation pathway, together with R15P isomerase and RubisCO. This Methanococcus maripaludis (strain C6 / ATCC BAA-1332) protein is AMP phosphorylase.